The primary structure comprises 346 residues: MQTEGKKNILVTGGAGFIGSAVVRHIIQNTRDSVVNLDKLTYAGNLESLTDIADNPRYAFEQVDICDRAELDRVFAQYRPDAVMHLAAESHVDRAIGSAGEFIRTNIVGTFDLLEAARAYWQQMPSEKREAFRFHHISTDEVYGDLHGTDDLFTETTPYAPSSPYSASKAAADHLVRAWQRTYRLPSIVSNCSNNYGPRQFPEKLIPLMILNALSGKPLPVYGDGAQIRDWLFVEDHARALYQVVTEGVVGETYNIGGHNEKTNLEVVKTICALLEELAPEKPAGVARYEDLITFVQDRPGHDARYAVDAAKIRRDLGWLPLETFESGLRKTVQWYLDNKTRRQNA.

Residues 17-18 (FI), 38-41 (DKLT), 64-65 (DI), 86-90 (LAAES), and threonine 105 each bind NAD(+). Substrate is bound at residue serine 90. Threonine 139 is a substrate binding site. Aspartate 140 acts as the Proton donor in catalysis. Residues glutamate 141 and tyrosine 165 each act as proton acceptor in the active site. Residue 165–169 (YSASK) coordinates NAD(+). Asparagine 194 is a binding site for substrate. Asparagine 195 serves as a coordination point for NAD(+). Residues 204–205 (KL), 220–222 (PVY), arginine 229, asparagine 264, and 298–302 (DRPGH) each bind substrate.

It belongs to the NAD(P)-dependent epimerase/dehydratase family. dTDP-glucose dehydratase subfamily. In terms of assembly, homodimer. It depends on NAD(+) as a cofactor.

It carries out the reaction dTDP-alpha-D-glucose = dTDP-4-dehydro-6-deoxy-alpha-D-glucose + H2O. The protein operates within carbohydrate biosynthesis; dTDP-L-rhamnose biosynthesis. Its pathway is bacterial outer membrane biogenesis; LPS O-antigen biosynthesis. Catalyzes the dehydration of dTDP-D-glucose to form dTDP-6-deoxy-D-xylo-4-hexulose via a three-step process involving oxidation, dehydration and reduction. The chain is dTDP-glucose 4,6-dehydratase from Neisseria gonorrhoeae.